Consider the following 175-residue polypeptide: Coagulogen (175 aa).

8 disulfide bridges follow: Cys-8–Cys-167, Cys-10–Cys-95, Cys-60–Cys-161, Cys-65–Cys-121, Cys-75–Cys-168, Cys-88–Cys-140, Cys-127–Cys-170, and Cys-134–Cys-172.

The protein belongs to the coagulin family. As to quaternary structure, coagulogen is cleaved after Arg-18 and Arg-46 by a clotting enzyme contained in the hemocyte and activated by a bacterial endotoxin (lipopolysaccharide). This cleavage releases the peptide C and leaves 2 chains of coagulin, A and B, linked by two disulfide bonds. Coagulin molecules interlink to form a gel. In terms of tissue distribution, hemolymph.

Its subcellular location is the secreted. Its function is as follows. Coagulogen is a gel-forming protein of hemolymph; it hinders the spread of invaders by immobilizing them. The sequence is that of Coagulogen from Tachypleus gigas (Southeast Asian horseshoe crab).